A 325-amino-acid chain; its full sequence is Transaldolase (325 aa).

K125 functions as the Schiff-base intermediate with substrate in the catalytic mechanism.

Belongs to the transaldolase family. Type 2 subfamily.

The protein resides in the cytoplasm. It carries out the reaction D-sedoheptulose 7-phosphate + D-glyceraldehyde 3-phosphate = D-erythrose 4-phosphate + beta-D-fructose 6-phosphate. The protein operates within carbohydrate degradation; pentose phosphate pathway; D-glyceraldehyde 3-phosphate and beta-D-fructose 6-phosphate from D-ribose 5-phosphate and D-xylulose 5-phosphate (non-oxidative stage): step 2/3. Transaldolase is important for the balance of metabolites in the pentose-phosphate pathway. This is Transaldolase (tal) from Campylobacter jejuni subsp. jejuni serotype O:2 (strain ATCC 700819 / NCTC 11168).